Consider the following 344-residue polypeptide: Protein RecA (344 aa).

65-72 is a binding site for ATP; sequence GPESSGKT.

The protein belongs to the RecA family.

The protein localises to the cytoplasm. Functionally, can catalyze the hydrolysis of ATP in the presence of single-stranded DNA, the ATP-dependent uptake of single-stranded DNA by duplex DNA, and the ATP-dependent hybridization of homologous single-stranded DNAs. It interacts with LexA causing its activation and leading to its autocatalytic cleavage. The chain is Protein RecA from Rubrobacter xylanophilus (strain DSM 9941 / JCM 11954 / NBRC 16129 / PRD-1).